Here is a 124-residue protein sequence, read N- to C-terminus: Fluoride-specific ion channel FluC (124 aa).

The next 4 helical transmembrane spans lie at 4-24 (VLLV…ISIF), 35-55 (FGTL…YALG), 60-80 (ISPE…TTFS), and 95-115 (WLKA…MVYL). Positions 74 and 77 each coordinate Na(+).

The protein belongs to the fluoride channel Fluc/FEX (TC 1.A.43) family.

Its subcellular location is the cell inner membrane. The enzyme catalyses fluoride(in) = fluoride(out). With respect to regulation, na(+) is not transported, but it plays an essential structural role and its presence is essential for fluoride channel function. In terms of biological role, fluoride-specific ion channel. Important for reducing fluoride concentration in the cell, thus reducing its toxicity. This is Fluoride-specific ion channel FluC from Shewanella putrefaciens (strain CN-32 / ATCC BAA-453).